A 191-amino-acid chain; its full sequence is Ribosomal RNA small subunit methyltransferase G (191 aa).

S-adenosyl-L-methionine is bound by residues Gly-59, 111–112, and Arg-124; that span reads IE.

The protein belongs to the methyltransferase superfamily. RNA methyltransferase RsmG family.

Its subcellular location is the cytoplasm. In terms of biological role, specifically methylates the N7 position of a guanine in 16S rRNA. The protein is Ribosomal RNA small subunit methyltransferase G of Mycoplasma pneumoniae (strain ATCC 29342 / M129 / Subtype 1) (Mycoplasmoides pneumoniae).